We begin with the raw amino-acid sequence, 100 residues long: NADH-quinone oxidoreductase subunit K 1 (100 aa).

Helical transmembrane passes span 4-24 (LHSYLIVSAILFSIGTIGVLV), 29-49 (IVIFMCVEMMLNAVNLTFIAL), and 60-80 (IFVFFVMTVAAAEAAVGLALM).

The protein belongs to the complex I subunit 4L family. As to quaternary structure, NDH-1 is composed of 14 different subunits. Subunits NuoA, H, J, K, L, M, N constitute the membrane sector of the complex.

The protein localises to the cell inner membrane. The enzyme catalyses a quinone + NADH + 5 H(+)(in) = a quinol + NAD(+) + 4 H(+)(out). In terms of biological role, NDH-1 shuttles electrons from NADH, via FMN and iron-sulfur (Fe-S) centers, to quinones in the respiratory chain. The immediate electron acceptor for the enzyme in this species is believed to be ubiquinone. Couples the redox reaction to proton translocation (for every two electrons transferred, four hydrogen ions are translocated across the cytoplasmic membrane), and thus conserves the redox energy in a proton gradient. In Geobacter sulfurreducens (strain ATCC 51573 / DSM 12127 / PCA), this protein is NADH-quinone oxidoreductase subunit K 1.